The primary structure comprises 500 residues: Probable malate:quinone oxidoreductase (500 aa).

This sequence belongs to the MQO family. Requires FAD as cofactor.

The catalysed reaction is (S)-malate + a quinone = a quinol + oxaloacetate. The protein operates within carbohydrate metabolism; tricarboxylic acid cycle; oxaloacetate from (S)-malate (quinone route): step 1/1. The chain is Probable malate:quinone oxidoreductase from Bacillus thuringiensis (strain Al Hakam).